A 400-amino-acid chain; its full sequence is Tyrosine--tRNA ligase 2 (400 aa).

Positions 46-55 (PSAPDIHLGH) match the 'HIGH' region motif. The 'KMSKS' region motif lies at 230-234 (KMSKS). Lys233 provides a ligand contact to ATP. An S4 RNA-binding domain is found at 339–399 (NNLIEAIVKI…GKKKIVKLLV (61 aa)).

Belongs to the class-I aminoacyl-tRNA synthetase family. TyrS type 2 subfamily. As to quaternary structure, homodimer.

It is found in the cytoplasm. It carries out the reaction tRNA(Tyr) + L-tyrosine + ATP = L-tyrosyl-tRNA(Tyr) + AMP + diphosphate + H(+). Catalyzes the attachment of tyrosine to tRNA(Tyr) in a two-step reaction: tyrosine is first activated by ATP to form Tyr-AMP and then transferred to the acceptor end of tRNA(Tyr). The chain is Tyrosine--tRNA ligase 2 from Clostridium acetobutylicum (strain ATCC 824 / DSM 792 / JCM 1419 / IAM 19013 / LMG 5710 / NBRC 13948 / NRRL B-527 / VKM B-1787 / 2291 / W).